A 240-amino-acid polypeptide reads, in one-letter code: UDP-2,3-diacylglucosamine hydrolase (240 aa).

5 residues coordinate Mn(2+): D7, H9, D40, N78, and H113. 78–79 (NR) serves as a coordination point for substrate. Residues D121, S159, T163, K166, and H194 each coordinate substrate. The Mn(2+) site is built by H194 and H196.

It belongs to the LpxH family. Requires Mn(2+) as cofactor.

It localises to the cell inner membrane. It catalyses the reaction UDP-2-N,3-O-bis[(3R)-3-hydroxytetradecanoyl]-alpha-D-glucosamine + H2O = 2-N,3-O-bis[(3R)-3-hydroxytetradecanoyl]-alpha-D-glucosaminyl 1-phosphate + UMP + 2 H(+). It participates in glycolipid biosynthesis; lipid IV(A) biosynthesis; lipid IV(A) from (3R)-3-hydroxytetradecanoyl-[acyl-carrier-protein] and UDP-N-acetyl-alpha-D-glucosamine: step 4/6. Its function is as follows. Hydrolyzes the pyrophosphate bond of UDP-2,3-diacylglucosamine to yield 2,3-diacylglucosamine 1-phosphate (lipid X) and UMP by catalyzing the attack of water at the alpha-P atom. Involved in the biosynthesis of lipid A, a phosphorylated glycolipid that anchors the lipopolysaccharide to the outer membrane of the cell. The protein is UDP-2,3-diacylglucosamine hydrolase of Stutzerimonas stutzeri (strain A1501) (Pseudomonas stutzeri).